The primary structure comprises 161 residues: Regulator of ribonuclease activity A (161 aa).

It belongs to the RraA family. Homotrimer. Binds to both RNA-binding sites in the C-terminal region of Rne and to RhlB.

It is found in the cytoplasm. Globally modulates RNA abundance by binding to RNase E (Rne) and regulating its endonucleolytic activity. Can modulate Rne action in a substrate-dependent manner by altering the composition of the degradosome. Modulates RNA-binding and helicase activities of the degradosome. This chain is Regulator of ribonuclease activity A, found in Edwardsiella ictaluri (strain 93-146).